Here is a 21-residue protein sequence, read N- to C-terminus: Malate dehydrogenase (21 aa).

11–17 contributes to the NAD(+) binding site; sequence GAAGQIA.

This sequence belongs to the LDH/MDH superfamily. MDH type 2 family.

It catalyses the reaction (S)-malate + NAD(+) = oxaloacetate + NADH + H(+). In terms of biological role, catalyzes the reversible oxidation of malate to oxaloacetate. The sequence is that of Malate dehydrogenase (mdh) from Vogesella indigofera (Pseudomonas indigofera).